Consider the following 331-residue polypeptide: MLVFMSDDLAGFSRQTTVPDGAAGRRFDAVLAELFPEFSRSRLTEWIKSGDVLLNGVLVRPRDPVYGGEVVWLQVMPDIRTDAVPQDIPLDILYEDEHVFVINKPAGLVVHPGAGNPDGTLVNALLHRDPALAAVPRAGVVHRLDKDTSGVMVVARTLQAQTALVEQLSSRQVHRQYLAVVVSALVSGGTVNAAIERHPRDRLRMEVSDTGKEAVTHYRLRERFRAHTALECRLDTGRTHQIRVHMAHLRHPIVGDRLYGGSLKLPKGGTDALVAMLRGFKRQALHAEVLEFLHPVRALPVRIVAPVPEDLCQLLAALREDSALFFEREWR.

The 73-residue stretch at 25 to 97 (RRFDAVLAEL…IPLDILYEDE (73 aa)) folds into the S4 RNA-binding domain. The active site involves D145.

It belongs to the pseudouridine synthase RluA family.

The protein localises to the cytoplasm. It catalyses the reaction uridine(1911/1915/1917) in 23S rRNA = pseudouridine(1911/1915/1917) in 23S rRNA. In terms of biological role, responsible for synthesis of pseudouridine from uracil at positions 1911, 1915 and 1917 in 23S ribosomal RNA. The protein is Ribosomal large subunit pseudouridine synthase D (rluD) of Xylella fastidiosa (strain Temecula1 / ATCC 700964).